The chain runs to 819 residues: Endonuclease MutS2 (819 aa).

339-346 is an ATP binding site; the sequence is GPNTGGKT. One can recognise a Smr domain in the interval 744–819; the sequence is VDVRGLRVDE…GAGVTVAELA (76 aa).

Belongs to the DNA mismatch repair MutS family. MutS2 subfamily. In terms of assembly, homodimer. Binds to stalled ribosomes, contacting rRNA.

Its function is as follows. Endonuclease that is involved in the suppression of homologous recombination and thus may have a key role in the control of bacterial genetic diversity. Acts as a ribosome collision sensor, splitting the ribosome into its 2 subunits. Detects stalled/collided 70S ribosomes which it binds and splits by an ATP-hydrolysis driven conformational change. Acts upstream of the ribosome quality control system (RQC), a ribosome-associated complex that mediates the extraction of incompletely synthesized nascent chains from stalled ribosomes and their subsequent degradation. Probably generates substrates for RQC. The protein is Endonuclease MutS2 of Gemmatimonas aurantiaca (strain DSM 14586 / JCM 11422 / NBRC 100505 / T-27).